A 633-amino-acid polypeptide reads, in one-letter code: Probable sodium/potassium/calcium exchanger CG1090 (633 aa).

Residues 1–21 (MWNMGLLFLIYYCVSIYSAKG) form the signal peptide. The Extracellular portion of the chain corresponds to 22-111 (DTKDGQVLPL…PLMNKWARQH (90 aa)). Residues 112–132 (GGLILHILVAVFTFFGLAIVC) form a helical membrane-spanning segment. The Cytoplasmic portion of the chain corresponds to 133–157 (DEYFVASLDRLCEELKLSPDVAGAT). The stretch at 153 to 193 (VAGATFMAAGSSAPELATVVIGVFFAKDDIGISGVIGSAVF) is one Alpha-1 repeat. The chain crosses the membrane as a helical span at residues 158 to 178 (FMAAGSSAPELATVVIGVFFA). The Extracellular segment spans residues 179–181 (KDD). A helical membrane pass occupies residues 182–202 (IGISGVIGSAVFNIMFVISVC). Over 203–220 (ALCSGTVCQLNWWPLVRD) the chain is Cytoplasmic. A run of 2 helical transmembrane segments spans residues 221 to 241 (CFFY…DVIS) and 242 to 262 (CFES…LHFN). Topologically, residues 263–427 (TELERWALGL…EPRRDPLLRP (165 aa)) are extracellular. 3 stretches are compositionally biased toward polar residues: residues 298–310 (YTQE…QGQK), 320–333 (AKPQ…SDPN), and 395–405 (QVVSTQATSAG). Residues 298-422 (YTQESVGQTQ…TDKQREPRRD (125 aa)) form a disordered region. The span at 411–422 (KSTDKQREPRRD) shows a compositional bias: basic and acidic residues. A helical transmembrane segment spans residues 428–448 (MEGGLPALVSWYVVYPIHFLC). The Cytoplasmic segment spans residues 449 to 468 (KKTMPDCRQEQYRNWYPFTF). The chain crosses the membrane as a helical span at residues 469–489 (LMSMVWISFYSYFMVWMITVI). Residues 490–500 (GSTLAIPDTVM) lie on the Extracellular side of the membrane. The helical transmembrane segment at 501 to 521 (GLTFVAAGVSVPDALSSIAVI) threads the bilayer. The stretch at 506–537 (AAGVSVPDALSSIAVIKEGFGDMAVSNAIGSN) is one Alpha-2 repeat. The Cytoplasmic segment spans residues 522 to 535 (KEGFGDMAVSNAIG). The chain crosses the membrane as a helical span at residues 536–556 (SNVFDILVCLGLPWFIQTAII). At 557 to 568 (KPGSHVNVISKG) the chain is on the extracellular side. The chain crosses the membrane as a helical span at residues 569–589 (LAYSTLSLFSTVVFLILSTHL). The Cytoplasmic portion of the chain corresponds to 590-597 (NGWKLDKR). Residues 598-618 (LGIILMVWYLFFITLASLYEL) form a helical membrane-spanning segment. Topologically, residues 619 to 633 (NVFGYMNPPECPSTY) are extracellular.

This sequence belongs to the Ca(2+):cation antiporter (CaCA) (TC 2.A.19) family. SLC24A subfamily.

It is found in the membrane. Functionally, may function in the removal and maintenance of calcium homeostasis. Transports one Ca(2+) and 1 K(+) in exchange for 4 Na(+). The chain is Probable sodium/potassium/calcium exchanger CG1090 from Drosophila melanogaster (Fruit fly).